The primary structure comprises 401 residues: Argininosuccinate synthase (401 aa).

ATP is bound by residues 9 to 17 (AYSGGLDTS) and A35. Residue Y86 coordinates L-citrulline. G116 is a binding site for ATP. L-aspartate-binding residues include T118, N122, and D123. Position 122 (N122) interacts with L-citrulline. Residues R126, S175, S184, E261, and Y273 each coordinate L-citrulline.

This sequence belongs to the argininosuccinate synthase family. Type 1 subfamily. Homotetramer.

The protein localises to the cytoplasm. It carries out the reaction L-citrulline + L-aspartate + ATP = 2-(N(omega)-L-arginino)succinate + AMP + diphosphate + H(+). It functions in the pathway amino-acid biosynthesis; L-arginine biosynthesis; L-arginine from L-ornithine and carbamoyl phosphate: step 2/3. The polypeptide is Argininosuccinate synthase (Aquifex aeolicus (strain VF5)).